The sequence spans 205 residues: Ribonuclease HII (205 aa).

Positions 16-205 constitute an RNase H type-2 domain; sequence VSEVGIDEVG…KSFLNQSDLI (190 aa). A divalent metal cation-binding residues include D22, E23, and D118.

It belongs to the RNase HII family. The cofactor is Mn(2+). It depends on Mg(2+) as a cofactor.

The protein localises to the cytoplasm. It catalyses the reaction Endonucleolytic cleavage to 5'-phosphomonoester.. Its function is as follows. Endonuclease that specifically degrades the RNA of RNA-DNA hybrids. This is Ribonuclease HII from Prochlorococcus marinus (strain MIT 9312).